Consider the following 316-residue polypeptide: Sideroflexin-4 (316 aa).

A run of 5 helical transmembrane segments spans residues 83-103, 141-161, 174-194, 230-250, and 263-283; these read QVFL…HKGI, LLIL…QIIL, ICRS…NILV, ISRA…MALL, and IAPI…PVSF.

This sequence belongs to the sideroflexin family.

Its subcellular location is the mitochondrion inner membrane. Mitochondrial amino-acid transporter. Does not act as a serine transporter: not able to mediate transport of serine into mitochondria. This is Sideroflexin-4 from Danio rerio (Zebrafish).